The primary structure comprises 397 residues: Cysteine desulfurase (397 aa).

Pyridoxal 5'-phosphate-binding positions include N148, Q176, and 196–198 (SAH). K199 is subject to N6-(pyridoxal phosphate)lysine. T234 contributes to the pyridoxal 5'-phosphate binding site. C321 functions as the Cysteine persulfide intermediate in the catalytic mechanism. C321 is a [2Fe-2S] cluster binding site.

Belongs to the class-V pyridoxal-phosphate-dependent aminotransferase family. NifS/IscS subfamily. Homodimer. Requires pyridoxal 5'-phosphate as cofactor.

It carries out the reaction (sulfur carrier)-H + L-cysteine = (sulfur carrier)-SH + L-alanine. Its function is as follows. Catalyzes the removal of elemental sulfur atoms from cysteine to produce alanine. Seems to participate in the biosynthesis of the nitrogenase metalloclusters by providing the inorganic sulfur required for the Fe-S core formation. The sequence is that of Cysteine desulfurase from Klebsiella pneumoniae.